A 474-amino-acid chain; its full sequence is Cytochrome c-552 (474 aa).

Residues 1 to 29 form the signal peptide; it reads MSIKHWMASSVSVTALVMTALLNITAVSA. His91 is a binding site for heme c. Cys119, Cys122, and Lys123 together coordinate heme. The heme c site is built by Cys157, Cys160, His161, Cys206, Cys209, and His210. 4 residues coordinate Ca(2+): Glu212, Tyr213, Lys258, and Gln260. Substrate is bound at residue Tyr213. His261 is a substrate binding site. Residues His272, Cys279, Cys282, His283, His298, Cys311, Cys314, His315, and His390 each coordinate heme c.

The protein belongs to the cytochrome c-552 family. Ca(2+) serves as cofactor. Heme c is required as a cofactor.

It is found in the periplasm. It catalyses the reaction 6 Fe(III)-[cytochrome c] + NH4(+) + 2 H2O = 6 Fe(II)-[cytochrome c] + nitrite + 8 H(+). Its pathway is nitrogen metabolism; nitrate reduction (assimilation). Catalyzes the reduction of nitrite to ammonia, consuming six electrons in the process. This chain is Cytochrome c-552, found in Vibrio vulnificus (strain CMCP6).